Consider the following 158-residue polypeptide: Small t antigen (158 aa).

The residue at position 1 (M1) is an N-acetylmethionine; by host. Residues 12–75 enclose the J domain; it reads RLMHLLKLPM…LPCLSTQDFI (64 aa). The C4-type; atypical zinc-finger motif lies at 95 to 106; it reads CNFENCNKCLYC. The H1C3-type; atypical zinc finger occupies 112-130; the sequence is HKSDPPFPKVWGYCLCYKC.

In terms of assembly, interacts with host PPP2R1A; the interaction inhibits PP2A activity.

It localises to the host cytoplasm. The protein resides in the host nucleus. Its function is as follows. Promotes efficient viral genome replication by accelerating both G1 and S phase progression of the cell cycle. Inhibits host PP2A by binding to the A subunit, thereby displacing lower affinity regulatory B subunit. Inactivation of PP2A in turn results in the transactivation of cyclin A and cyclin D1 promoters. Late during the infection cycle, ST may induce dephosphorylation of host MTOR, leading to the inhibition of cap-dependent translation. May establish and maintain high levels of viral genomes during persistent infection in cell culture. In Mus musculus (Mouse), this protein is Small t antigen.